We begin with the raw amino-acid sequence, 365 residues long: DNA replication and repair protein RecF (365 aa).

Residue 30–37 participates in ATP binding; the sequence is GLNAQGKT.

This sequence belongs to the RecF family.

Its subcellular location is the cytoplasm. In terms of biological role, the RecF protein is involved in DNA metabolism; it is required for DNA replication and normal SOS inducibility. RecF binds preferentially to single-stranded, linear DNA. It also seems to bind ATP. The chain is DNA replication and repair protein RecF from Chlamydia trachomatis serovar L2b (strain UCH-1/proctitis).